A 238-amino-acid chain; its full sequence is Probable transcriptional regulatory protein TC_0742 (238 aa).

Residues 1 to 21 (MAGHSKWANTKHRKERADHKK) form a disordered region. The span at 9–21 (NTKHRKERADHKK) shows a compositional bias: basic residues.

It belongs to the TACO1 family.

It is found in the cytoplasm. The protein is Probable transcriptional regulatory protein TC_0742 of Chlamydia muridarum (strain MoPn / Nigg).